The sequence spans 701 residues: Long chain acyl-CoA synthetase 6, peroxisomal (701 aa).

Residues M1–T38 constitute a propeptide, removed in mature form. A Microbody targeting signal motif is present at residues R15–L23. I266–K277 provides a ligand contact to ATP. Residues D526–K550 form a fatty acid-binding region.

It belongs to the ATP-dependent AMP-binding enzyme family. Mg(2+) is required as a cofactor. Expressed in roots, stems, leaves flowers and germinating seedling. Preferentially expressed in seeds and senescent leaves.

Its subcellular location is the peroxisome. The protein resides in the glyoxysome membrane. The enzyme catalyses a long-chain fatty acid + ATP + CoA = a long-chain fatty acyl-CoA + AMP + diphosphate. It carries out the reaction tetradecanoate + ATP + CoA = tetradecanoyl-CoA + AMP + diphosphate. The catalysed reaction is hexadecanoate + ATP + CoA = hexadecanoyl-CoA + AMP + diphosphate. It catalyses the reaction (9Z)-octadecenoate + ATP + CoA = (9Z)-octadecenoyl-CoA + AMP + diphosphate. The enzyme catalyses (9Z,12Z)-octadecadienoate + ATP + CoA = (9Z,12Z)-octadecadienoyl-CoA + AMP + diphosphate. It carries out the reaction (9Z,12Z,15Z)-octadecatrienoate + ATP + CoA = (9Z,12Z,15Z)-octadecatrienoyl-CoA + AMP + diphosphate. Its pathway is lipid metabolism; fatty acid metabolism. Functionally, activation of long-chain fatty acids for both synthesis of cellular lipids, and degradation via beta-oxidation. Preferentially uses palmitate, palmitoleate, oleate, linoleate and eicosenoate as substrates. Can use myristate and linolenate as substrates. May play a regulatory role both in fatty acid import into glyoxysomes and in fatty acid beta-oxidation. Functions redundantly with LACS7 in lipid mobilization for beta-oxidation during seed germination, which is essential for postgerminative growth and seedling establishment. This chain is Long chain acyl-CoA synthetase 6, peroxisomal, found in Arabidopsis thaliana (Mouse-ear cress).